The sequence spans 206 residues: MMRTLITTHSLLLFLLLLQLLQPLQFQDMYYEDFYFPVSRTEEDFEDFLVEFQSTGPTRPPTKEKVKRRILVNPGMPLGDSGYCNYQIMRKNVYYKYSCVTEHYFLLMQYDELEKTCYNRFVPCKNGIRKCNRSKKLVEGVYCYLTEASNLPMCQYESFYRRGYVLITCTWQNEIQKLIPYTINDIVEPPNHRSLLNEDGVFVISP.

The first 26 residues, M1–F26, serve as a signal peptide directing secretion. Intrachain disulfides connect C99–C154, C117–C169, and C124–C131. N132 is a glycosylation site (N-linked (GlcNAc...) asparagine).

It belongs to the pancreatic ribonuclease family.

Its subcellular location is the secreted. Its function is as follows. Does not exhibit any ribonuclease activity. This Saimiri boliviensis boliviensis (Bolivian squirrel monkey) protein is Inactive ribonuclease-like protein 9 (RNASE9).